Reading from the N-terminus, the 528-residue chain is FAD-dependent monooxygenase DEP2 (528 aa).

The signal sequence occupies residues 1 to 23; the sequence is MEDGRSTFKVIIIGAGVTGLTLA. Residues Asp37, Arg110, Asp311, and Gly324 each coordinate FAD. A helical membrane pass occupies residues 479-499; sequence VFPQILGVLMVMWSSVWLFHL. A glycan (N-linked (GlcNAc...) asparagine) is linked at Asn521.

Belongs to the paxM FAD-dependent monooxygenase family. The cofactor is FAD.

Its subcellular location is the membrane. It functions in the pathway polyketide biosynthesis. Its function is as follows. FAD-dependent monooxygenase; part of the gene cluster that mediates the biosynthesis of depudecin, a highly oxidized eleven-carbon linear polyketide that acts as a histone deacetylase (HDAC) inhibitor and makes a small contribution to pathogenesis. The reducing polyketide synthase DEP5 is the central enzyme in depudecin biosynthesis by yielding the backbone polyketide chain. The monooxygenases DEP2 and DEP4, as well as the uncharacterized protein DEP1, then act as tailoring enzymes to modify the intermediate polyketide chain into depudecin. The chain is FAD-dependent monooxygenase DEP2 from Alternaria brassicicola (Dark leaf spot agent).